The following is a 103-amino-acid chain: Small ribosomal subunit protein uS10 (103 aa).

The protein belongs to the universal ribosomal protein uS10 family. Part of the 30S ribosomal subunit.

Functionally, involved in the binding of tRNA to the ribosomes. This Vibrio cholerae serotype O1 (strain ATCC 39541 / Classical Ogawa 395 / O395) protein is Small ribosomal subunit protein uS10.